Consider the following 401-residue polypeptide: Homocysteine-responsive endoplasmic reticulum-resident ubiquitin-like domain member 2 protein (401 aa).

Positions 10 to 89 constitute a Ubiquitin-like domain; that stretch reads VTLIIKAPNQ…HMVHLVCASR (80 aa). A disordered region spans residues 87–137; it reads ASRSPPSSPKSSTDGESHGALASSTNSNSDHSDSTTPSPSQESLSLVAGSS. 2 stretches are compositionally biased toward low complexity: residues 88 to 98 and 109 to 126; these read SRSPPSSPKSS and SSTNSNSDHSDSTTPSPS. The chain crosses the membrane as a helical span at residues 299-319; sequence FIMVMGAMLLVYLHQAGWFPF.

It localises to the membrane. Could be involved in the unfolded protein response (UPR) pathway. The sequence is that of Homocysteine-responsive endoplasmic reticulum-resident ubiquitin-like domain member 2 protein (Herpud2) from Rattus norvegicus (Rat).